The chain runs to 122 residues: MIQTQSMLDVADNSGARRVMCIKVLGGSHRRYAGIGDIIKVTVKEAIPRGKVKKGQVMTAVVVRTKHGVRRTDGSIIRFDGNAAVLLNNKQEPIGTRIFGPVTRELRTEKFMKIVSLAPEVL.

This sequence belongs to the universal ribosomal protein uL14 family. In terms of assembly, part of the 50S ribosomal subunit. Forms a cluster with proteins L3 and L19. In the 70S ribosome, L14 and L19 interact and together make contacts with the 16S rRNA in bridges B5 and B8.

Binds to 23S rRNA. Forms part of two intersubunit bridges in the 70S ribosome. This Pseudomonas aeruginosa (strain LESB58) protein is Large ribosomal subunit protein uL14.